A 2485-amino-acid chain; its full sequence is Tyrosine-protein phosphatase non-receptor type 13 (2485 aa).

The KIND domain maps to 3–190 (VSLAEALEVR…SGTDQLSCNS (188 aa)). A disordered region spans residues 186-220 (LSCNSEQKPDRSQAIRDRLRGKGLPTGRSSTSDVL). Residues 192–205 (QKPDRSQAIRDRLR) show a composition bias toward basic and acidic residues. S240 bears the Phosphoserine mark. A disordered region spans residues 260-283 (SDNSGREDSENTFSPYQFKTSGPE). Residues 270–279 (NTFSPYQFKT) are compositionally biased toward polar residues. 2 positions are modified to phosphoserine: S301 and S302. The segment at 433 to 467 (RSEASKRFESSSGLPGVDETLSQGQSQRPSRQYET) is disordered. Residues 452-465 (TLSQGQSQRPSRQY) show a composition bias toward polar residues. Residues 469 to 504 (FEGNLINQEIMLKRQEEELMQLQAKMALRQSRLSLY) adopt a coiled-coil conformation. The FERM domain maps to 572–872 (RKVNIMLLNG…YQHKFQLQMR (301 aa)). 5 positions are modified to phosphoserine: S890, S897, S908, S911, and S914. 2 disordered regions span residues 947-975 (QNSSKEKNDKASWEEKPREMSKSYHDLSQ) and 995-1049 (TVAE…IEDP). Over residues 950-971 (SKEKNDKASWEEKPREMSKSYH) the composition is skewed to basic and acidic residues. Residues 1020-1032 (KLNNSKSVASLNR) show a composition bias toward polar residues. Phosphoserine occurs at positions 1029, 1033, and 1085. A compositionally biased stretch (basic and acidic residues) spans 1033-1042 (SPERRKHESD). Residues 1093–1178 (LVNLKKDAKY…EDVTLVISQP (86 aa)) enclose the PDZ 1 domain. 2 disordered regions span residues 1227–1258 (HISENSFGPSGGLREGSLSSQDSRTESASLSQ) and 1273–1362 (TWQE…SPPK). 3 stretches are compositionally biased toward polar residues: residues 1243–1258 (SLSSQDSRTESASLSQ), 1273–1288 (TWQESQHGSPSPSVIS), and 1327–1359 (TYSSSQDHQTPKQESSSSVNTSNKMNFKTFSSS). 2 consecutive PDZ domains span residues 1368–1452 (EVEL…LEKG) and 1501–1588 (EVKL…LCRP). Residues 1608 to 1630 (AQVLPNSSKDSSQPSCVEQSTSS) are compositionally biased toward polar residues. 2 disordered regions span residues 1608 to 1665 (AQVL…DLVT) and 1715 to 1751 (PNKPEFEDSNPSPLPPDMAPGQSYQPQSESASSSSMD). A compositionally biased stretch (low complexity) spans 1736 to 1749 (QSYQPQSESASSSS). 2 PDZ domains span residues 1788-1868 (LITL…IGRV) and 1882-1965 (PDIT…ATRN). The segment at 1971–1996 (PSSKRSAVSAPKSTKGNGSYSVGSCS) is disordered. Over residues 1973 to 1996 (SKRSAVSAPKSTKGNGSYSVGSCS) the composition is skewed to polar residues. Residues 2213 to 2467 (PSKELENLQE…IFCYQVILYV (255 aa)) enclose the Tyrosine-protein phosphatase domain. Substrate is bound by residues D2378, 2408 to 2414 (CSAGIGR), and Q2452. The active-site Phosphocysteine intermediate is the C2408. The segment at 2408–2414 (CSAGIGR) is substrate.

It belongs to the protein-tyrosine phosphatase family. Non-receptor class subfamily. As to quaternary structure, interacts (via the first PDZ domain) with PLEKHA1 and PLEKHA2. Interacts (via the second PDZ domain) with TNFRSF6 (Fas receptor) (via C-terminus). Interacts (via the second PDZ domain) with TRIP6 (via the third LIM domain and C-terminus). Interacts (via the third PDZ domain) with NGFR (via C-terminal SVP motif) and PKN2 (via C-terminus). Interacts (via the second or fourth PDZ domains) with PDLIM4 (via C-terminus only or via combined C-terminus and LIM domain, but not LIM domain only). Found in a complex with PDLIM4 and TRIP6. Interacts with PDLIM4; this interaction results in dephosphorylation of SRC 'Tyr-419' by this protein leading to its inactivation. Interacts with BRD7. Interacts with RAPGEF6. Interacts with ARHGAP29. Interacts with PIK3R2; dephosphorylates PIK3R2. Interacts with FBXL2. Interacts (via the FERM domain) with ENTR1. Found in a complex with ENTR1, PTPN13 and GIT1. As to expression, expressed in keratinocytes (at protein level). Present in most tissues with the exception of the liver and skeletal muscle. Most abundant in lung, kidney and fetal brain.

It is found in the cytoplasm. The protein resides in the cytoskeleton. The protein localises to the nucleus. Its subcellular location is the cell projection. It localises to the lamellipodium. The enzyme catalyses O-phospho-L-tyrosyl-[protein] + H2O = L-tyrosyl-[protein] + phosphate. In terms of biological role, tyrosine phosphatase which negatively regulates FAS-induced apoptosis and NGFR-mediated pro-apoptotic signaling. May regulate phosphoinositide 3-kinase (PI3K) signaling through dephosphorylation of PIK3R2. The chain is Tyrosine-protein phosphatase non-receptor type 13 (PTPN13) from Homo sapiens (Human).